A 415-amino-acid chain; its full sequence is Putative ankyrin repeat protein FPV034 (415 aa).

10 ANK repeats span residues 12–41 (ICIK…NINT), 43–72 (KHFN…NINI), 76–105 (VGYT…IINK), 107–135 (DYRL…NINV), 139–168 (KGYT…DISI), 170–200 (NKYS…DVNI), 203–232 (HVKA…DVNI), 237–266 (GGRT…NVDS), 270–299 (VGNT…DINV), and 303–332 (FGET…SLKV).

This chain is Putative ankyrin repeat protein FPV034 (ANK2), found in Fowlpox virus (strain NVSL) (FPV).